We begin with the raw amino-acid sequence, 438 residues long: MINKKKLVTSLVTSSLLATFTLGSFADAHTYIINNEDINKNAQESSIGTLKQNNFKQSTIDSMKPRNLQSFQEDKVFKAPKEKTPITERARKSENALSNSKLNDVRSFTTVNMRTNENERTAAKLKYNGKNTNVWVADNYITDKQAKNIGEEFDNKIDPLVKEKFGEPSDVDHDGKVNILVYDIKDDFETTGSYTGGYFHPRDLYDVPHSNKAEVFYMDTYPSMGTDKNNLNEKKVYSTLAHEYQHMVNANQKLLKEQKEDGMDVWLDEAFAMASEHMYLQKPLDHRIEYYNNSTSIANGHSLIKWNHRGDVLSNYALSYLFSQYLSAQSDNGDKIFKEILQDPANTSEALENAIHKHVDPKMSLGEFMTNFRVALEKKEATGLHGFNGAPGLNSISPKPVRELPQTLAPQGSVMFETTSPIKVPKDKDEKVNYVKVK.

An N-terminal signal peptide occupies residues 1 to 26 (MINKKKLVTSLVTSSLLATFTLGSFA). Residues 27–101 (DAHTYIINNE…KSENALSNSK (75 aa)) constitute a propeptide that is removed on maturation. His242 contributes to the Zn(2+) binding site. Glu243 is an active-site residue. Zn(2+) is bound by residues His246 and Glu269.

Belongs to the peptidase M30 family. It depends on Zn(2+) as a cofactor. Post-translationally, several different N-terminal ends may be produced, the favored N-terminus is position 102.

The protein resides in the secreted. With respect to regulation, inhibited by metal- and zinc-specific inhibitors, such as EDTA and 1,10-phenanthroline in vitro. Is resistant to all inhibitors of serine, cysteine and aspartic proteases. Functionally, protease that has a low substrate specificity. Catalyzes the hydrolysis of glucagon, melittin and oxidized beta-insulin at various positions in vitro. Is not able to cleave elastin or the synthetic substrates FAGLA (a substrate for neutral proteinases) and FALGPA (a substrate for collagenase). The polypeptide is Neutral metalloprotease ShpI (Staphylococcus hyicus).